The chain runs to 236 residues: 2,3,4,5-tetrahydropyridine-2,6-dicarboxylate N-acetyltransferase (236 aa).

Belongs to the transferase hexapeptide repeat family. DapH subfamily.

It catalyses the reaction (S)-2,3,4,5-tetrahydrodipicolinate + acetyl-CoA + H2O = L-2-acetamido-6-oxoheptanedioate + CoA. It participates in amino-acid biosynthesis; L-lysine biosynthesis via DAP pathway; LL-2,6-diaminopimelate from (S)-tetrahydrodipicolinate (acetylase route): step 1/3. In terms of biological role, catalyzes the transfer of an acetyl group from acetyl-CoA to tetrahydrodipicolinate. The protein is 2,3,4,5-tetrahydropyridine-2,6-dicarboxylate N-acetyltransferase of Clostridium botulinum (strain 657 / Type Ba4).